The chain runs to 468 residues: Eukaryotic translation initiation factor 3 subunit M (468 aa).

The segment at 42-61 (PLIEPLRQQEQSEEEPDRKQ) is disordered. The 172-residue stretch at 206–377 (DLELAQTHVV…SEFLVHRATY (172 aa)) folds into the PCI domain. Positions 418 to 468 (MQAAAEETGQGKSGDKGAKGGDRRRNPQQQQQSQPSQPQQAREVELVGGAE) are disordered. The segment covering 430–442 (SGDKGAKGGDRRR) has biased composition (basic and acidic residues). The span at 444 to 457 (PQQQQQSQPSQPQQ) shows a compositional bias: low complexity.

The protein belongs to the eIF-3 subunit M family. As to quaternary structure, component of the eukaryotic translation initiation factor 3 (eIF-3) complex.

It localises to the cytoplasm. Functionally, component of the eukaryotic translation initiation factor 3 (eIF-3) complex, which is involved in protein synthesis of a specialized repertoire of mRNAs and, together with other initiation factors, stimulates binding of mRNA and methionyl-tRNAi to the 40S ribosome. The eIF-3 complex specifically targets and initiates translation of a subset of mRNAs involved in cell proliferation. The protein is Eukaryotic translation initiation factor 3 subunit M of Neosartorya fischeri (strain ATCC 1020 / DSM 3700 / CBS 544.65 / FGSC A1164 / JCM 1740 / NRRL 181 / WB 181) (Aspergillus fischerianus).